The primary structure comprises 240 residues: Heme oxygenase 1 (240 aa).

Heme b contacts are provided by R10, H17, Y125, K168, and R172.

The protein belongs to the heme oxygenase family.

The catalysed reaction is heme b + 3 reduced [NADPH--hemoprotein reductase] + 3 O2 = biliverdin IXalpha + CO + Fe(2+) + 3 oxidized [NADPH--hemoprotein reductase] + 3 H2O + H(+). Catalyzes the opening of the heme ring with the release of iron. Key enzyme in the synthesis of the chromophoric part of the photosynthetic antennae. The polypeptide is Heme oxygenase 1 (pbsA1) (Synechocystis sp. (strain ATCC 27184 / PCC 6803 / Kazusa)).